The chain runs to 255 residues: Small ribosomal subunit protein uS2 (255 aa).

The disordered stretch occupies residues 230-255 (QGSSGRDLGASSEVPVEPALEEAAEG).

The protein belongs to the universal ribosomal protein uS2 family.

The sequence is that of Small ribosomal subunit protein uS2 from Rhizobium johnstonii (strain DSM 114642 / LMG 32736 / 3841) (Rhizobium leguminosarum bv. viciae).